A 505-amino-acid chain; its full sequence is Aminoaldehyde dehydrogenase 2 (505 aa).

Ile-31 and Asp-99 together coordinate Na(+). Residues 159–161 (TPW) and 185–188 (KPSE) each bind NAD(+). Residue Leu-189 coordinates Na(+). NAD(+) is bound at residue 238–242 (GSGPT). Catalysis depends on Glu-260, which acts as the Proton acceptor. Residue Leu-261 participates in NAD(+) binding. The active-site Nucleophile is Cys-295. Glu-394 and Trp-460 together coordinate NAD(+).

It belongs to the aldehyde dehydrogenase family. As to quaternary structure, forms homodimers.

It carries out the reaction 4-aminobutanal + NAD(+) + H2O = 4-aminobutanoate + NADH + 2 H(+). The catalysed reaction is 3-aminopropanal + NAD(+) + H2O = beta-alanine + NADH + 2 H(+). It catalyses the reaction 4-(trimethylamino)butanal + NAD(+) + H2O = 4-(trimethylamino)butanoate + NADH + 2 H(+). The enzyme catalyses 4-guanidinobutanal + NAD(+) + H2O = 4-guanidinobutanoate + NADH + 2 H(+). It participates in amine and polyamine biosynthesis; betaine biosynthesis via choline pathway; betaine from betaine aldehyde: step 1/1. Functionally, dehydrogenase that catalyzes the oxidation of several aminoaldehydes. Metabolizes and detoxifies aldehyde products of polyamine degradation to non-toxic amino acids. Catalyzes the oxidation of 4-aminobutanal and 3-aminopropanal to 4-aminobutanoate and beta-alanine, respectively. Catalyzes the oxidation of 4-(trimethylamino)butanal and 4-guanidinobutanal to 4-trimethylammoniobutanoate and 4-guanidinobutanoate, respectively. This Solanum lycopersicum (Tomato) protein is Aminoaldehyde dehydrogenase 2.